Consider the following 385-residue polypeptide: Isocitrate dehydrogenase [NAD] subunit beta, mitochondrial (385 aa).

Residues 1–34 (MAALSGVRWLTRALVSAGNPGAWRGLSTSAAAHA) constitute a mitochondrion transit peptide. Lysine 199 is modified (N6-acetyllysine).

This sequence belongs to the isocitrate and isopropylmalate dehydrogenases family. Heterooligomer of subunits alpha (IDH3A), beta (IDH3B), and gamma (IDH3G) in the apparent ratio of 2:1:1. The heterodimer containing one IDH3A and one IDH3B subunit and the heterodimer containing one IDH3A and one IDH3G subunit assemble into a heterotetramer (which contains two subunits of IDH3A, one of IDH3B and one of IDH3G) and further into the heterooctamer.

Its subcellular location is the mitochondrion. The heterotetramer and the heterodimer composed of IDH3A and IDH3G subunits can be allosterically activated by citrate (CIT) or/and ADP, and the two activators can act independently or synergistically. The heterodimer composed of IDH3A and IDH3B subunits cannot be allosterically regulated and the allosteric regulation of the heterotetramer is through the IDH3G subunit and not the IDH3B subunit. The IDH3G subunit contains the allosteric site which consists of a CIT-binding site and an ADP-binding site, and the binding of CIT and ADP causes conformational changes at the allosteric site which are transmitted to the active site in the catalytic subunit (IDH3A) through a cascade of conformational changes at the heterodimer interface, leading to stabilization of the isocitrate-binding at the active site and thus activation of the enzyme. ATP can activate the heterotetramer and the heterodimer composed of IDH3A and IDH3G subunits at low concentrations but inhibits their activities at high concentrations, whereas ATP exhibits only inhibitory effect on the heterodimer composed of IDH3A and IDH3B subunits. Plays a structural role to facilitate the assembly and ensure the full activity of the enzyme catalyzing the decarboxylation of isocitrate (ICT) into alpha-ketoglutarate. The heterodimer composed of the alpha (IDH3A) and beta (IDH3B) subunits and the heterodimer composed of the alpha (IDH3A) and gamma (IDH3G) subunits, have considerable basal activity but the full activity of the heterotetramer (containing two subunits of IDH3A, one of IDH3B and one of IDH3G) requires the assembly and cooperative function of both heterodimers. This Macaca fascicularis (Crab-eating macaque) protein is Isocitrate dehydrogenase [NAD] subunit beta, mitochondrial (IDH3B).